The chain runs to 524 residues: Xanthotoxin 5-hydroxylase CYP82C4 (524 aa).

The chain crosses the membrane as a helical span at residues 1 to 21; the sequence is MDTSLFSLFVPILVFVFIALF. Cys-463 is a heme binding site.

The protein belongs to the cytochrome P450 family. It depends on heme as a cofactor. In terms of tissue distribution, expressed in both primary and lateral roots under iron-deficient conditions, except in apical root zones, and mostly in the root epidermal layer.

The protein localises to the membrane. The catalysed reaction is fraxetin + reduced [NADPH--hemoprotein reductase] + O2 = sideretin (reduced form) + oxidized [NADPH--hemoprotein reductase] + H2O + H(+). It catalyses the reaction xanthotoxin + reduced [NADPH--hemoprotein reductase] + O2 = 5-hydroxyxanthotoxin + oxidized [NADPH--hemoprotein reductase] + H2O + 2 H(+). It participates in phenylpropanoid metabolism. Can hydroxylate xanthotoxin (8-methoxypsoralen) to form 5-hydroxyxanthotoxin (5-hydroxy-8-methoxypsoralen) in vivo and in vitro. Involved in the early iron deficiency response, possibly through an IDE1-like mediated pathway. Involved in the pathway of sideretin biosynthesis from feruloyl CoA, a redox-active catecholic metabolite exuded by roots in response to iron deficiency in order to facilitate the uptake of iron; this pathway consists in the successive conversion from feruloyl CoA to scopoletin, from scopoletin to fraxetin and from fraxetin to sideretin. Catalyzes the biosynthesis of sideretin via fraxetin hydroxylation. This chain is Xanthotoxin 5-hydroxylase CYP82C4, found in Arabidopsis thaliana (Mouse-ear cress).